Consider the following 663-residue polypeptide: 72 kDa type IV collagenase (663 aa).

The N-terminal stretch at 1–26 is a signal peptide; the sequence is MKTHSVFGFFFKVLLIQVYLFNKTLA. The propeptide at 27 to 106 is activation peptide; the sequence is APSPIIKFPG…PRCGNPDVAN (80 aa). The short motif at 97–104 is the Cysteine switch element; sequence PRCGNPDV. Residue cysteine 99 participates in Zn(2+) binding. The tract at residues 107-218 is collagenase-like 1; that stretch reads YNFFPRKPKW…LWTLGEGQVV (112 aa). Residues aspartate 131 and aspartate 165 each contribute to the Ca(2+) site. Positions 175 and 177 each coordinate Zn(2+). Positions 182 and 183 each coordinate Ca(2+). Zn(2+) is bound at residue histidine 190. Residues glycine 197, glycine 199, and aspartate 201 each coordinate Ca(2+). Histidine 203 is a Zn(2+) binding site. The Ca(2+) site is built by aspartate 205, aspartate 206, and glutamate 208. The segment at 219-393 is collagen-binding; that stretch reads RVKYGNADGE…WGFCPDQGYS (175 aa). 3 Fibronectin type-II domains span residues 225–273, 283–331, and 341–389; these read ADGE…FCPH, GDGQ…FCPE, and SEGA…FCPD. Intrachain disulfides connect cysteine 230–cysteine 256, cysteine 244–cysteine 271, cysteine 288–cysteine 314, cysteine 302–cysteine 329, cysteine 346–cysteine 372, and cysteine 360–cysteine 387. Positions 394 to 468 are collagenase-like 2; that stretch reads LFLVAAHEFG…GPRPTLGPVT (75 aa). Zn(2+) is bound at residue histidine 400. The active site involves glutamate 401. Zn(2+) is bound by residues histidine 404 and histidine 410. The interval 445–464 is disordered; that stretch reads SPDVEPGPGPGPGPGPRPTL. Positions 449 to 463 are enriched in pro residues; it reads EPGPGPGPGPGPRPT. Cysteine 472 and cysteine 663 form a disulfide bridge. 4 Hemopexin repeats span residues 475–519, 520–566, 568–616, and 617–663; these read DIVF…WPDL, PEKI…GLPP, VQRI…WNGV, and PDNL…WLGC. Aspartate 479, aspartate 524, aspartate 572, and aspartate 621 together coordinate Ca(2+).

Belongs to the peptidase M10A family. In terms of assembly, ligand for integrin alpha-V/beta-3. Ca(2+) is required as a cofactor. Requires Zn(2+) as cofactor. Post-translationally, the propeptide is processed by MMP14 (MT-MMP1) and MMP16 (MT-MMP3). As to expression, produced by normal skin fibroblasts.

It localises to the secreted. The protein localises to the extracellular space. Its subcellular location is the extracellular matrix. It catalyses the reaction Cleavage of gelatin type I and collagen types IV, V, VII, X. Cleaves the collagen-like sequence Pro-Gln-Gly-|-Ile-Ala-Gly-Gln.. The chain is 72 kDa type IV collagenase (MMP2) from Gallus gallus (Chicken).